Consider the following 511-residue polypeptide: Lysine--tRNA ligase 2 (511 aa).

Residues 1-11 are compositionally biased toward polar residues; that stretch reads MTMEINNTDPS. The tract at residues 1 to 21 is disordered; sequence MTMEINNTDPSENMPLPDDVD. Positions 421 and 428 each coordinate Mg(2+).

It belongs to the class-II aminoacyl-tRNA synthetase family. Homodimer. Mg(2+) is required as a cofactor.

It localises to the cytoplasm. It catalyses the reaction tRNA(Lys) + L-lysine + ATP = L-lysyl-tRNA(Lys) + AMP + diphosphate. The protein is Lysine--tRNA ligase 2 of Methanosarcina acetivorans (strain ATCC 35395 / DSM 2834 / JCM 12185 / C2A).